Consider the following 360-residue polypeptide: Biotin synthase (360 aa).

Residues Met1–Ala25 form a disordered region. Residues Asn58–Arg285 enclose the Radical SAM core domain. [4Fe-4S] cluster is bound by residues Cys73, Cys77, and Cys80. Positions 117, 148, 208, and 280 each coordinate [2Fe-2S] cluster. The disordered stretch occupies residues Gln340–Asp360.

Belongs to the radical SAM superfamily. Biotin synthase family. Homodimer. [4Fe-4S] cluster serves as cofactor. The cofactor is [2Fe-2S] cluster.

The enzyme catalyses (4R,5S)-dethiobiotin + (sulfur carrier)-SH + 2 reduced [2Fe-2S]-[ferredoxin] + 2 S-adenosyl-L-methionine = (sulfur carrier)-H + biotin + 2 5'-deoxyadenosine + 2 L-methionine + 2 oxidized [2Fe-2S]-[ferredoxin]. It functions in the pathway cofactor biosynthesis; biotin biosynthesis; biotin from 7,8-diaminononanoate: step 2/2. Functionally, catalyzes the conversion of dethiobiotin (DTB) to biotin by the insertion of a sulfur atom into dethiobiotin via a radical-based mechanism. In Ralstonia nicotianae (strain ATCC BAA-1114 / GMI1000) (Ralstonia solanacearum), this protein is Biotin synthase.